We begin with the raw amino-acid sequence, 322 residues long: Protease HtpX homolog (322 aa).

Transmembrane regions (helical) follow at residues 19-39 and 61-81; these read ILLI…CYLL and FINL…IAYF. Residue His165 participates in Zn(2+) binding. Glu166 is a catalytic residue. His169 contributes to the Zn(2+) binding site. Transmembrane regions (helical) follow at residues 175 to 195 and 216 to 236; these read VRLL…AQIA and ILIL…ATLM. Glu245 is a Zn(2+) binding site.

The protein belongs to the peptidase M48B family. The cofactor is Zn(2+).

The protein resides in the cell inner membrane. The polypeptide is Protease HtpX homolog (Bacteroides fragilis (strain YCH46)).